Reading from the N-terminus, the 247-residue chain is Probable chemoreceptor glutamine deamidase CheD (247 aa).

Residues 204–247 are disordered; that stretch reads KRPAAPQPARPRIELFGGRGTTPGAGSQAAGSPYAANLSRKQEA.

Belongs to the CheD family.

The enzyme catalyses L-glutaminyl-[protein] + H2O = L-glutamyl-[protein] + NH4(+). Probably deamidates glutamine residues to glutamate on methyl-accepting chemotaxis receptors (MCPs), playing an important role in chemotaxis. The sequence is that of Probable chemoreceptor glutamine deamidase CheD from Burkholderia orbicola (strain MC0-3).